Reading from the N-terminus, the 602-residue chain is Replication protein E1 (602 aa).

The short motif at 79–81 (KRK) is the Nuclear localization signal element. Phosphoserine; by host is present on residues Ser85 and Ser92. A Nuclear export signal motif is present at residues 91 to 100 (LSPRLQCISI). The DNA-binding region stretch occupies residues 142–305 (QGAKGLGIVK…TMINHQTAEA (164 aa)). The SF3 helicase domain maps to 404-554 (INFIQFLDSF…FPFDSDNNPQ (151 aa)). 430–437 (GPPDTGKS) contacts ATP.

Belongs to the papillomaviridae E1 protein family. Can form hexamers. Interacts with E2 protein; this interaction increases E1 DNA binding specificity. Interacts with host DNA polymerase subunit POLA2. Interacts with host single stranded DNA-binding protein RPA1. Interacts with host TOP1; this interaction stimulates the enzymatic activity of TOP1. Phosphorylated.

The protein resides in the host nucleus. The catalysed reaction is Couples ATP hydrolysis with the unwinding of duplex DNA by translocating in the 3'-5' direction.. It catalyses the reaction ATP + H2O = ADP + phosphate + H(+). In terms of biological role, ATP-dependent DNA 3'-5' helicase required for initiation of viral DNA replication. It forms a complex with the viral E2 protein. The E1-E2 complex binds to the replication origin which contains binding sites for both proteins. During the initial step, a dimer of E1 interacts with a dimer of protein E2 leading to a complex that binds the viral origin of replication with high specificity. Then, a second dimer of E1 displaces the E2 dimer in an ATP-dependent manner to form the E1 tetramer. Following this, two E1 monomers are added to each half of the site, which results in the formation of two E1 trimers on the viral ori. Subsequently, two hexamers will be created. The double hexamer acts as a bi-directional helicase machinery and unwinds the viral DNA and then recruits the host DNA polymerase to start replication. This chain is Replication protein E1, found in Homo sapiens (Human).